Here is a 347-residue protein sequence, read N- to C-terminus: Sensor protein VraS (347 aa).

The next 2 membrane-spanning stretches (helical) occupy residues 13–33 and 43–63; these read ILVYSMLAAFLFIDKVFVNII and IFGIPVFLFLNLIIILLCIIV. Residues 150–341 form the Histidine kinase domain; that stretch reads RLARELHDSV…RIEVKAPLNK (192 aa). A Phosphohistidine modification is found at His156.

Post-translationally, autophosphorylated on His-156.

It localises to the cell membrane. The catalysed reaction is ATP + protein L-histidine = ADP + protein N-phospho-L-histidine.. Member of the two-component regulatory system PprA/PprB involved in biofilm formation by controlling the expression of many related genes including type IVb pili major subunit flp pilin, adhesin bapA or cupE fimbriae. Also modulates quorum-sensing signal production acting on both negative and positive modulators. Functions as a heme sensor histidine kinase which is autophosphorylated at a histidine residue and transfers its phosphate group to PprB. This chain is Sensor protein VraS (vraS), found in Staphylococcus aureus (strain COL).